The chain runs to 656 residues: Heat shock 70 kDa protein, mitochondrial (656 aa).

A mitochondrion-targeting transit peptide spans 1 to 23 (MFARRLRGAGSLAAASLARWQSS). A disordered region spans residues 624–656 (EYQQAAAGNSSSSSGNTDSSQGEQQQQGDQQKQ). The span at 626-656 (QQAAAGNSSSSSGNTDSSQGEQQQQGDQQKQ) shows a compositional bias: low complexity.

It belongs to the heat shock protein 70 family.

The protein localises to the mitochondrion matrix. Its subcellular location is the kinetoplast. Functionally, may participate in eukaryotic mitochondrial DNA replication. The protein is Heat shock 70 kDa protein, mitochondrial (MTP70) of Trypanosoma cruzi.